The following is a 127-amino-acid chain: Protein YwpG (127 aa).

As to quaternary structure, interacts with both the D1 and D2 domains of dynamin-like protein DynA.

Its subcellular location is the cell membrane. The polypeptide is Protein YwpG (ywpG) (Bacillus subtilis (strain 168)).